Consider the following 171-residue polypeptide: Galectin-related protein (171 aa).

The Galectin domain maps to 38-170 (PFCGHIKGGM…INGDLQLTKL (133 aa)).

Its function is as follows. Does not bind lactose, and may not bind carbohydrates. This chain is Galectin-related protein (lgalsl), found in Xenopus tropicalis (Western clawed frog).